The chain runs to 61 residues: Photosystem II reaction center protein K (61 aa).

Residues 1–24 (MLNIFSLICICLHSTLYSSSFFLA) constitute a propeptide that is removed on maturation. Residues 36–56 (IVDFMPVIPLLFFLLAFVWQA) form a helical membrane-spanning segment.

Belongs to the PsbK family. In terms of assembly, PSII is composed of 1 copy each of membrane proteins PsbA, PsbB, PsbC, PsbD, PsbE, PsbF, PsbH, PsbI, PsbJ, PsbK, PsbL, PsbM, PsbT, PsbX, PsbY, PsbZ, Psb30/Ycf12, at least 3 peripheral proteins of the oxygen-evolving complex and a large number of cofactors. It forms dimeric complexes.

It localises to the plastid. The protein resides in the chloroplast thylakoid membrane. One of the components of the core complex of photosystem II (PSII). PSII is a light-driven water:plastoquinone oxidoreductase that uses light energy to abstract electrons from H(2)O, generating O(2) and a proton gradient subsequently used for ATP formation. It consists of a core antenna complex that captures photons, and an electron transfer chain that converts photonic excitation into a charge separation. The polypeptide is Photosystem II reaction center protein K (Eucalyptus globulus subsp. globulus (Tasmanian blue gum)).